The primary structure comprises 155 residues: uncharacterized protein (155 aa).

Positions 1 to 155 (MIVKYIKGDI…IVIVDWEPLL (155 aa)) constitute a Macro domain.

This is an uncharacterized protein from Escherichia coli (Bacteriophage T4).